The primary structure comprises 178 residues: MKLLLCLGLTLVCIHAEEATSKGQNLNVEKINGEWFSILLASDKREKIEEHGSMRVFVEHIHVLENSLAFKFHTVIDGECSEIFLVADKTEKAGEYSVMYDGFNTFTILKTDYDNYIMFHLINEKDGKTFQLMELYGRKADLNSDIKEKFVKLCEEHGIIKENIIDLTKTNRCLKARE.

Positions Met1–Ala16 are cleaved as a signal peptide. A disulfide bond links Cys80 and Cys173.

This sequence belongs to the calycin superfamily. Lipocalin family. As to expression, expressed in lacrimal gland, parotid gland, sublingual gland, nasal mucus, and vomeronasal organ.

It is found in the secreted. Binds pheromones, likely to displace pheromones complexed to urinary MUPs and transport them to the vomeronasal organ (VNO) where they associate with their neuronal receptor(s). MUP4 is highly specific for the male mouse pheromone 2-sec-butyl-4,5-dihydrothiazole (SBT). This Mus musculus (Mouse) protein is Major urinary protein 4 (Mup4).